Reading from the N-terminus, the 333-residue chain is Ketol-acid reductoisomerase (NADP(+)) (333 aa).

The KARI N-terminal Rossmann domain maps to 2 to 182 (AKLYYEKDCN…GGARAGVLKT (181 aa)). NADP(+) is bound by residues 25 to 28 (YGSQ), Ser-51, Ser-53, and 83 to 86 (DEKQ). The active site involves His-108. Gly-134 contributes to the NADP(+) binding site. The 146-residue stretch at 183–328 (TFKEETETDL…KELRDMMSWS (146 aa)) folds into the KARI C-terminal knotted domain. Mg(2+) contacts are provided by Asp-191, Glu-195, Glu-227, and Glu-231. Position 252 (Ser-252) interacts with substrate.

It belongs to the ketol-acid reductoisomerase family. Mg(2+) is required as a cofactor.

It carries out the reaction (2R)-2,3-dihydroxy-3-methylbutanoate + NADP(+) = (2S)-2-acetolactate + NADPH + H(+). The enzyme catalyses (2R,3R)-2,3-dihydroxy-3-methylpentanoate + NADP(+) = (S)-2-ethyl-2-hydroxy-3-oxobutanoate + NADPH + H(+). Its pathway is amino-acid biosynthesis; L-isoleucine biosynthesis; L-isoleucine from 2-oxobutanoate: step 2/4. The protein operates within amino-acid biosynthesis; L-valine biosynthesis; L-valine from pyruvate: step 2/4. Involved in the biosynthesis of branched-chain amino acids (BCAA). Catalyzes an alkyl-migration followed by a ketol-acid reduction of (S)-2-acetolactate (S2AL) to yield (R)-2,3-dihydroxy-isovalerate. In the isomerase reaction, S2AL is rearranged via a Mg-dependent methyl migration to produce 3-hydroxy-3-methyl-2-ketobutyrate (HMKB). In the reductase reaction, this 2-ketoacid undergoes a metal-dependent reduction by NADPH to yield (R)-2,3-dihydroxy-isovalerate. In Alkaliphilus metalliredigens (strain QYMF), this protein is Ketol-acid reductoisomerase (NADP(+)).